We begin with the raw amino-acid sequence, 117 residues long: Large ribosomal subunit protein bL20 (117 aa).

This sequence belongs to the bacterial ribosomal protein bL20 family.

Its function is as follows. Binds directly to 23S ribosomal RNA and is necessary for the in vitro assembly process of the 50S ribosomal subunit. It is not involved in the protein synthesizing functions of that subunit. This chain is Large ribosomal subunit protein bL20, found in Citrifermentans bemidjiense (strain ATCC BAA-1014 / DSM 16622 / JCM 12645 / Bem) (Geobacter bemidjiensis).